A 383-amino-acid chain; its full sequence is Putative [LysW]-aminoadipate semialdehyde/glutamate semialdehyde transaminase (383 aa).

Pyridoxal 5'-phosphate-binding positions include 97–98 and F124; that span reads GT. Substrate is bound at residue R127. 209–212 contributes to the pyridoxal 5'-phosphate binding site; that stretch reads DEVQ. K238 carries the post-translational modification N6-(pyridoxal phosphate)lysine. S266 provides a ligand contact to substrate. Pyridoxal 5'-phosphate is bound at residue T267.

The protein belongs to the class-III pyridoxal-phosphate-dependent aminotransferase family. LysJ subfamily. As to quaternary structure, homodimer. Requires pyridoxal 5'-phosphate as cofactor.

The protein localises to the cytoplasm. It catalyses the reaction [amino-group carrier protein]-C-terminal-gamma-(L-lysyl)-L-glutamate + 2-oxoglutarate = [amino-group carrier protein]-C-terminal-N-(1-carboxy-5-oxopentan-1-yl)-L-glutamine + L-glutamate. It carries out the reaction [amino-group carrier protein]-C-terminal-gamma-(L-ornithyl)-L-glutamate + 2-oxoglutarate = [amino-group carrier protein]-C-terminal-gamma-(L-glutamyl-5-semialdehyde)-L-glutamate + L-glutamate. It participates in amino-acid biosynthesis; L-lysine biosynthesis via AAA pathway; L-lysine from L-alpha-aminoadipate (Thermus route): step 4/5. It functions in the pathway amino-acid biosynthesis; L-arginine biosynthesis. Its function is as follows. Involved in both the arginine and lysine biosynthetic pathways. The chain is Putative [LysW]-aminoadipate semialdehyde/glutamate semialdehyde transaminase from Pyrobaculum aerophilum (strain ATCC 51768 / DSM 7523 / JCM 9630 / CIP 104966 / NBRC 100827 / IM2).